The chain runs to 211 residues: Stromal cell-derived factor 2 (211 aa).

Positions 1-18 (MAVLSLLLLGGLWSAVGA) are cleaved as a signal peptide. MIR domains lie at 21-75 (MAVV…IRGK), 83-138 (GTPI…VLCN), and 139-193 (GPYW…AMEG).

In terms of tissue distribution, ubiquitously expressed with highest expression in liver and kidney.

The protein resides in the secreted. The protein is Stromal cell-derived factor 2 (Sdf2) of Mus musculus (Mouse).